Reading from the N-terminus, the 320-residue chain is Lipoyl synthase (320 aa).

The segment covering 1–11 (MGGMNDLSSTP) has biased composition (polar residues). The interval 1 to 24 (MGGMNDLSSTPAPEGDRPARQRKP) is disordered. The segment covering 14–24 (EGDRPARQRKP) has biased composition (basic and acidic residues). 7 residues coordinate [4Fe-4S] cluster: Cys53, Cys58, Cys64, Cys79, Cys83, Cys86, and Ser293. In terms of domain architecture, Radical SAM core spans 65–282 (WTKKHATVMI…GAIARAKGFL (218 aa)).

This sequence belongs to the radical SAM superfamily. Lipoyl synthase family. It depends on [4Fe-4S] cluster as a cofactor.

The protein localises to the cytoplasm. The enzyme catalyses [[Fe-S] cluster scaffold protein carrying a second [4Fe-4S](2+) cluster] + N(6)-octanoyl-L-lysyl-[protein] + 2 oxidized [2Fe-2S]-[ferredoxin] + 2 S-adenosyl-L-methionine + 4 H(+) = [[Fe-S] cluster scaffold protein] + N(6)-[(R)-dihydrolipoyl]-L-lysyl-[protein] + 4 Fe(3+) + 2 hydrogen sulfide + 2 5'-deoxyadenosine + 2 L-methionine + 2 reduced [2Fe-2S]-[ferredoxin]. Its pathway is protein modification; protein lipoylation via endogenous pathway; protein N(6)-(lipoyl)lysine from octanoyl-[acyl-carrier-protein]: step 2/2. Its function is as follows. Catalyzes the radical-mediated insertion of two sulfur atoms into the C-6 and C-8 positions of the octanoyl moiety bound to the lipoyl domains of lipoate-dependent enzymes, thereby converting the octanoylated domains into lipoylated derivatives. This is Lipoyl synthase from Erythrobacter litoralis (strain HTCC2594).